A 460-amino-acid chain; its full sequence is ATP synthase subunit beta (460 aa).

ATP is bound at residue Gly-150–Thr-157.

Belongs to the ATPase alpha/beta chains family. As to quaternary structure, F-type ATPases have 2 components, CF(1) - the catalytic core - and CF(0) - the membrane proton channel. CF(1) has five subunits: alpha(3), beta(3), gamma(1), delta(1), epsilon(1). CF(0) has three main subunits: a(1), b(2) and c(9-12). The alpha and beta chains form an alternating ring which encloses part of the gamma chain. CF(1) is attached to CF(0) by a central stalk formed by the gamma and epsilon chains, while a peripheral stalk is formed by the delta and b chains.

It localises to the cell inner membrane. It catalyses the reaction ATP + H2O + 4 H(+)(in) = ADP + phosphate + 5 H(+)(out). In terms of biological role, produces ATP from ADP in the presence of a proton gradient across the membrane. The catalytic sites are hosted primarily by the beta subunits. In Klebsiella pneumoniae subsp. pneumoniae (strain ATCC 700721 / MGH 78578), this protein is ATP synthase subunit beta.